A 363-amino-acid chain; its full sequence is Putative glutamate--cysteine ligase 2-3 (363 aa).

Belongs to the glutamate--cysteine ligase type 2 family. YbdK subfamily.

It carries out the reaction L-cysteine + L-glutamate + ATP = gamma-L-glutamyl-L-cysteine + ADP + phosphate + H(+). Its function is as follows. ATP-dependent carboxylate-amine ligase which exhibits weak glutamate--cysteine ligase activity. The protein is Putative glutamate--cysteine ligase 2-3 of Rubrobacter xylanophilus (strain DSM 9941 / JCM 11954 / NBRC 16129 / PRD-1).